We begin with the raw amino-acid sequence, 362 residues long: Myricetin 3'-O-methyltransferase 4 (362 aa).

Asp-229 serves as a coordination point for S-adenosyl-L-methionine. Catalysis depends on His-267, which acts as the Proton acceptor.

This sequence belongs to the class I-like SAM-binding methyltransferase superfamily. Cation-independent O-methyltransferase family. In terms of assembly, homodimer. As to expression, mainly expressed in stem and petiole trichomes.

It catalyses the reaction myricetin + S-adenosyl-L-methionine = laricitrin + S-adenosyl-L-homocysteine + H(+). It participates in flavonoid metabolism. Functionally, flavonoid 3'-O-methyltransferase involved in the biosynthesis of polymethoxylated flavonoids natural products such as myricetin derivatives, aroma compounds possessing antioxidant properties and exhibiting pharmacological activities such as anti-carcinogen, anti-viral, anti-thrombotic, anti-diabetic, anti-atherosclerotic, and anti-inflammatory effects. Catalyzes S-adenosylmethionine-dependent regioselective 3'-O-methylation of flavonoids; active on various hydroxylated flavonoid substrates, including myricetin, thus producing 3'-methyl myricetin (laricitrin). This chain is Myricetin 3'-O-methyltransferase 4, found in Solanum lycopersicum (Tomato).